The chain runs to 286 residues: Phosphoribosylaminoimidazole-succinocarboxamide synthase (286 aa).

The protein belongs to the SAICAR synthetase family.

It carries out the reaction 5-amino-1-(5-phospho-D-ribosyl)imidazole-4-carboxylate + L-aspartate + ATP = (2S)-2-[5-amino-1-(5-phospho-beta-D-ribosyl)imidazole-4-carboxamido]succinate + ADP + phosphate + 2 H(+). Its pathway is purine metabolism; IMP biosynthesis via de novo pathway; 5-amino-1-(5-phospho-D-ribosyl)imidazole-4-carboxamide from 5-amino-1-(5-phospho-D-ribosyl)imidazole-4-carboxylate: step 1/2. The polypeptide is Phosphoribosylaminoimidazole-succinocarboxamide synthase (Actinobacillus succinogenes (strain ATCC 55618 / DSM 22257 / CCUG 43843 / 130Z)).